We begin with the raw amino-acid sequence, 607 residues long: Polypeptide N-acetylgalactosaminyltransferase 18 (607 aa).

The Cytoplasmic portion of the chain corresponds to 1 to 12; sequence MVCTRKTKTLVS. A helical; Signal-anchor for type II membrane protein membrane pass occupies residues 13–35; the sequence is TCVILSGMTNIICLLYVGWVTNY. The Lumenal portion of the chain corresponds to 36-607; the sequence is IASVYVRGQE…ITNVLRSLAS (572 aa). Cystine bridges form between C144/C377, C368/C447, C482/C498, C530/C543, and C571/C591. An N-linked (GlcNAc...) asparagine glycan is attached at N146. Residues 153–267 are catalytic subdomain A; sequence LPEVSIVFIF…VGWAEPVLTR (115 aa). D194 is a substrate binding site. A glycan (N-linked (GlcNAc...) asparagine) is linked at N195. Mn(2+) is bound by residues D251 and H253. A glycan (N-linked (GlcNAc...) asparagine) is linked at N320. The segment at 324–385 is catalytic subdomain B; sequence PIRSPALIGC…PCSRIAHIER (62 aa). Residue H382 coordinates Mn(2+). Residues R385 and Y390 each coordinate substrate. Residues 469-599 enclose the Ricin B-type lectin domain; sequence AYGVLQNSLK…KCSGQHWSIT (131 aa).

Belongs to the glycosyltransferase 2 family. GalNAc-T subfamily. Mn(2+) is required as a cofactor.

Its subcellular location is the golgi apparatus membrane. The enzyme catalyses L-seryl-[protein] + UDP-N-acetyl-alpha-D-galactosamine = a 3-O-[N-acetyl-alpha-D-galactosaminyl]-L-seryl-[protein] + UDP + H(+). It carries out the reaction L-threonyl-[protein] + UDP-N-acetyl-alpha-D-galactosamine = a 3-O-[N-acetyl-alpha-D-galactosaminyl]-L-threonyl-[protein] + UDP + H(+). It functions in the pathway protein modification; protein glycosylation. Catalyzes the initial reaction in O-linked oligosaccharide biosynthesis, the transfer of an N-acetyl-D-galactosamine (GalNAc) residue from UDP-GalNAc to a serine or threonine residue on the protein receptor. The chain is Polypeptide N-acetylgalactosaminyltransferase 18 (GALNT18) from Homo sapiens (Human).